The chain runs to 501 residues: Aldehyde dehydrogenase 1A1 (501 aa).

The residue at position 2 (S2) is an N-acetylserine. An N6-acetyllysine mark is found at K91 and K128. Residues 167–170, 193–196, 226–227, and 246–247 each bind NAD(+); these read IPWN, KPAE, GP, and GS. K252 bears the N6-acetyllysine mark. E269 (proton acceptor) is an active-site residue. An NAD(+)-binding site is contributed by 269 to 271; that stretch reads ELG. C303 (nucleophile) is an active-site residue. A mediates interaction with PRMT3 region spans residues 336–501; sequence LTQGINQGPQ…VAMKISQKNS (166 aa). T337 carries the phosphothreonine modification. 349 to 353 contacts NAD(+); sequence EQHDK. K353 and K367 each carry N6-acetyllysine. Position 400-402 (400-402) interacts with NAD(+); it reads EIF. At K410 the chain carries N6-acetyllysine. S413 carries the phosphoserine modification. An N6-acetyllysine mark is found at K419, K435, and K495.

The protein belongs to the aldehyde dehydrogenase family. In terms of assembly, homotetramer. Interacts with PRMT3; the interaction is direct, inhibits ALDH1A1 aldehyde dehydrogenase activity and is independent of the methyltransferase activity of PRMT3. The N-terminus is blocked most probably by acetylation. In terms of tissue distribution, strongly expressed in kidney, lung, testis, intestine, stomach, and trachea, but weakly in the liver.

The protein resides in the cytoplasm. It is found in the cytosol. Its subcellular location is the cell projection. The protein localises to the axon. The enzyme catalyses an aldehyde + NAD(+) + H2O = a carboxylate + NADH + 2 H(+). It catalyses the reaction all-trans-retinal + NAD(+) + H2O = all-trans-retinoate + NADH + 2 H(+). It carries out the reaction 9-cis-retinal + NAD(+) + H2O = 9-cis-retinoate + NADH + 2 H(+). The catalysed reaction is 11-cis-retinal + NAD(+) + H2O = 11-cis-retinoate + NADH + 2 H(+). The enzyme catalyses 13-cis-retinal + NAD(+) + H2O = 13-cis-retinoate + NADH + 2 H(+). It catalyses the reaction 3-deoxyglucosone + NAD(+) + H2O = 2-dehydro-3-deoxy-D-gluconate + NADH + 2 H(+). It carries out the reaction (E)-4-hydroxynon-2-enal + NAD(+) + H2O = (E)-4-hydroxynon-2-enoate + NADH + 2 H(+). The catalysed reaction is malonaldehyde + NAD(+) + H2O = 3-oxopropanoate + NADH + 2 H(+). The enzyme catalyses hexanal + NAD(+) + H2O = hexanoate + NADH + 2 H(+). It catalyses the reaction propanal + NAD(+) + H2O = propanoate + NADH + 2 H(+). It carries out the reaction acetaldehyde + NAD(+) + H2O = acetate + NADH + 2 H(+). The catalysed reaction is benzaldehyde + NAD(+) + H2O = benzoate + NADH + 2 H(+). The enzyme catalyses 4-aminobutanal + NAD(+) + H2O = 4-aminobutanoate + NADH + 2 H(+). It functions in the pathway cofactor metabolism; retinol metabolism. Inhibited by chloral hydrate. In terms of biological role, cytosolic dehydrogenase that catalyzes the irreversible oxidation of a wide range of aldehydes to their corresponding carboxylic acid. Functions downstream of retinol dehydrogenases and catalyzes the oxidation of retinaldehyde into retinoic acid, the second step in the oxidation of retinol/vitamin A into retinoic acid. This pathway is crucial to control the levels of retinol and retinoic acid, two important molecules which excess can be teratogenic and cytotoxic. Also oxidizes aldehydes resulting from lipid peroxidation like (E)-4-hydroxynon-2-enal/HNE, malonaldehyde and hexanal that form protein adducts and are highly cytotoxic. By participating for instance to the clearance of (E)-4-hydroxynon-2-enal/HNE in the lens epithelium prevents the formation of HNE-protein adducts and lens opacification. Functions also downstream of fructosamine-3-kinase in the fructosamine degradation pathway by catalyzing the oxidation of 3-deoxyglucosone, the carbohydrate product of fructosamine 3-phosphate decomposition, which is itself a potent glycating agent that may react with lysine and arginine side-chains of proteins. Also has an aminobutyraldehyde dehydrogenase activity and is probably part of an alternative pathway for the biosynthesis of GABA/4-aminobutanoate in midbrain, thereby playing a role in GABAergic synaptic transmission. In Rattus norvegicus (Rat), this protein is Aldehyde dehydrogenase 1A1.